A 258-amino-acid chain; its full sequence is Imidazole glycerol phosphate synthase subunit HisF (258 aa).

Active-site residues include aspartate 11 and aspartate 130.

It belongs to the HisA/HisF family. Heterodimer of HisH and HisF.

The protein localises to the cytoplasm. It catalyses the reaction 5-[(5-phospho-1-deoxy-D-ribulos-1-ylimino)methylamino]-1-(5-phospho-beta-D-ribosyl)imidazole-4-carboxamide + L-glutamine = D-erythro-1-(imidazol-4-yl)glycerol 3-phosphate + 5-amino-1-(5-phospho-beta-D-ribosyl)imidazole-4-carboxamide + L-glutamate + H(+). It participates in amino-acid biosynthesis; L-histidine biosynthesis; L-histidine from 5-phospho-alpha-D-ribose 1-diphosphate: step 5/9. IGPS catalyzes the conversion of PRFAR and glutamine to IGP, AICAR and glutamate. The HisF subunit catalyzes the cyclization activity that produces IGP and AICAR from PRFAR using the ammonia provided by the HisH subunit. The protein is Imidazole glycerol phosphate synthase subunit HisF of Shigella flexneri serotype 5b (strain 8401).